A 421-amino-acid polypeptide reads, in one-letter code: Testin (421 aa).

The PET domain occupies 92–199; sequence MILTNPVAAK…GDVKLPREMN (108 aa). The interval 133 to 164 is disordered; the sequence is EKQPVAGSEGAQYRKKQLAKQLPAHDQDPSKC. Residues 155–164 are compositionally biased toward basic and acidic residues; it reads PAHDQDPSKC. LIM zinc-binding domains are found at residues 234–297, 299–359, and 362–421; these read YSCY…CDSE, PRCA…NHAV, and QGCH…KMMS.

Belongs to the prickle / espinas / testin family. Interacts via LIM domain 1 with ZYX. Interacts (via LIM domain 3) with ENAH and VASP. Interacts with ALKBH4, talin, actin, alpha-actinin, GRIP1 and PXN. Interacts (via LIM domain 2) with ACTL7A (via N-terminus). Heterodimer with ACTL7A; the heterodimer interacts with ENAH to form a heterotrimer.

The protein localises to the cytoplasm. Its subcellular location is the cell junction. It is found in the focal adhesion. Its function is as follows. Scaffold protein that may play a role in cell adhesion, cell spreading and in the reorganization of the actin cytoskeleton. Plays a role in the regulation of cell proliferation. May act as a tumor suppressor. This Sus scrofa (Pig) protein is Testin (TES).